A 329-amino-acid chain; its full sequence is GTP 3',8-cyclase (329 aa).

In terms of domain architecture, Radical SAM core spans 8–229; that stretch reads AFARTFYYLR…AGWQRRLPGR (222 aa). Residue arginine 17 participates in GTP binding. The [4Fe-4S] cluster site is built by cysteine 24 and cysteine 28. Tyrosine 30 provides a ligand contact to S-adenosyl-L-methionine. Residue cysteine 31 participates in [4Fe-4S] cluster binding. Position 68 (arginine 68) interacts with GTP. Glycine 72 contacts S-adenosyl-L-methionine. Threonine 99 contacts GTP. Serine 123 lines the S-adenosyl-L-methionine pocket. Lysine 160 is a binding site for GTP. Methionine 194 contacts S-adenosyl-L-methionine. [4Fe-4S] cluster-binding residues include cysteine 257 and cysteine 260. Residue 262–264 coordinates GTP; sequence RLR. [4Fe-4S] cluster is bound at residue cysteine 274.

Belongs to the radical SAM superfamily. MoaA family. Monomer and homodimer. The cofactor is [4Fe-4S] cluster.

It carries out the reaction GTP + AH2 + S-adenosyl-L-methionine = (8S)-3',8-cyclo-7,8-dihydroguanosine 5'-triphosphate + 5'-deoxyadenosine + L-methionine + A + H(+). It functions in the pathway cofactor biosynthesis; molybdopterin biosynthesis. In terms of biological role, catalyzes the cyclization of GTP to (8S)-3',8-cyclo-7,8-dihydroguanosine 5'-triphosphate. The chain is GTP 3',8-cyclase from Edwardsiella ictaluri (strain 93-146).